Reading from the N-terminus, the 146-residue chain is Arginine repressor (146 aa).

It belongs to the ArgR family.

It localises to the cytoplasm. The protein operates within amino-acid biosynthesis; L-arginine biosynthesis [regulation]. Its function is as follows. Regulates arginine biosynthesis genes. The protein is Arginine repressor of Parabacteroides distasonis (strain ATCC 8503 / DSM 20701 / CIP 104284 / JCM 5825 / NCTC 11152).